The following is a 205-amino-acid chain: ATP-dependent Clp protease proteolytic subunit (205 aa).

The active-site Nucleophile is the serine 109. Histidine 134 is an active-site residue.

Belongs to the peptidase S14 family. As to quaternary structure, fourteen ClpP subunits assemble into 2 heptameric rings which stack back to back to give a disk-like structure with a central cavity, resembling the structure of eukaryotic proteasomes.

It is found in the cytoplasm. The enzyme catalyses Hydrolysis of proteins to small peptides in the presence of ATP and magnesium. alpha-casein is the usual test substrate. In the absence of ATP, only oligopeptides shorter than five residues are hydrolyzed (such as succinyl-Leu-Tyr-|-NHMec, and Leu-Tyr-Leu-|-Tyr-Trp, in which cleavage of the -Tyr-|-Leu- and -Tyr-|-Trp bonds also occurs).. Its function is as follows. Cleaves peptides in various proteins in a process that requires ATP hydrolysis. Has a chymotrypsin-like activity. Plays a major role in the degradation of misfolded proteins. The polypeptide is ATP-dependent Clp protease proteolytic subunit (Buchnera aphidicola subsp. Baizongia pistaciae (strain Bp)).